The chain runs to 292 residues: Small ribosomal subunit biogenesis GTPase RsgA (292 aa).

Residues 64-221 (RSELFRPAVA…LVDTPGFSSL (158 aa)) enclose the CP-type G domain. GTP-binding positions include 113 to 116 (NKMD) and 164 to 172 (GPSGVGKST). Zn(2+)-binding residues include Cys245, Cys250, His252, and Cys258.

It belongs to the TRAFAC class YlqF/YawG GTPase family. RsgA subfamily. Monomer. Associates with 30S ribosomal subunit, binds 16S rRNA. It depends on Zn(2+) as a cofactor.

It is found in the cytoplasm. In terms of biological role, one of several proteins that assist in the late maturation steps of the functional core of the 30S ribosomal subunit. Helps release RbfA from mature subunits. May play a role in the assembly of ribosomal proteins into the subunit. Circularly permuted GTPase that catalyzes slow GTP hydrolysis, GTPase activity is stimulated by the 30S ribosomal subunit. This Clostridium botulinum (strain Kyoto / Type A2) protein is Small ribosomal subunit biogenesis GTPase RsgA.